Consider the following 511-residue polypeptide: MKTKHYWVISLLAVLAVGPGLMSNTALSSVQGLVQKTVGTSVFTSVNPILIGNMAFALLVPAGPLLRKKFGARPVYLASLPVFILGSLLIACSGDIALMAAGRFLQGAATGVMLMIMIPMLVLSFPIERRNYALLVLIGGFYGSVIIGTILGTIATSCGHWRWLFFIFGTLSLIGVAVSYFFLHDEHHGAADQEQPLDRAGILLSVFLAAASAVSFIFLQKWGLSSGYVWIGFGVTLCLLIGLLIVEYKVKNPFISIKLMLLPKPVLGLLIIAAGTITVAVSLSAFQGLLRQMYDISQEHLILLSLTLLIGVAIAAILSALLYDKVGPGMLGIIGGLILVFVNFQWLHIQDRSSLYMFAALFIMLAAGTGLTVAAGLMGAAMGGPLPDLVKRMTAVQFLRLFVYMGVPILIGFFTKKDAARQSGSVQDSMMTAYHDLFFISFILSVLLVCLSFCMNATGMGHKLAHKPHDKAKTAPEKPAVSAQGLSKATVKSYKVINDTEYRNALRNLQK.

The next 14 helical transmembrane spans lie at 7–27, 46–66, 80–100, 107–127, 134–154, 163–183, 200–220, 226–246, 266–286, 301–321, 329–349, 357–377, 394–414, and 437–457; these read WVISLLAVLAVGPGLMSNTAL, VNPILIGNMAFALLVPAGPLL, LPVFILGSLLIACSGDIALMA, GAATGVMLMIMIPMLVLSFPI, LLVLIGGFYGSVIIGTILGTI, WLFFIFGTLSLIGVAVSYFFL, AGILLSVFLAAASAVSFIFLQ, SGYVWIGFGVTLCLLIGLLIV, VLGLLIIAAGTITVAVSLSAF, LILLSLTLLIGVAIAAILSAL, GMLGIIGGLILVFVNFQWLHI, MFAALFIMLAAGTGLTVAAGL, TAVQFLRLFVYMGVPILIGFF, and LFFISFILSVLLVCLSFCMNA. The tract at residues 465–486 is disordered; the sequence is AHKPHDKAKTAPEKPAVSAQGL.

Belongs to the major facilitator superfamily.

The protein localises to the cell membrane. This is an uncharacterized protein from Bacillus subtilis (strain 168).